The following is a 367-amino-acid chain: Heme A synthase (367 aa).

The next 5 helical transmembrane spans lie at 25–45 (ALRF…LVGG), 111–131 (LIAR…WLTG), 139–159 (WPLV…WWMV), 174–194 (LATH…IMRG), and 210–230 (GFAA…ALVA). His274 lines the heme pocket. The next 3 membrane-spanning stretches (helical) occupy residues 276–296 (IGAY…LRAA), 305–325 (AVVL…TLLM), and 327–347 (VPLH…GFAI). Heme is bound at residue His335.

Belongs to the COX15/CtaA family. Type 2 subfamily. In terms of assembly, interacts with CtaB. Requires heme b as cofactor.

The protein localises to the cell membrane. The enzyme catalyses Fe(II)-heme o + 2 A + H2O = Fe(II)-heme a + 2 AH2. The protein operates within porphyrin-containing compound metabolism; heme A biosynthesis; heme A from heme O: step 1/1. Its function is as follows. Catalyzes the conversion of heme O to heme A by two successive hydroxylations of the methyl group at C8. The first hydroxylation forms heme I, the second hydroxylation results in an unstable dihydroxymethyl group, which spontaneously dehydrates, resulting in the formyl group of heme A. The sequence is that of Heme A synthase from Rhizobium leguminosarum bv. trifolii (strain WSM2304).